The sequence spans 216 residues: FGFR1 oncogene partner 2 homolog (216 aa).

Coiled-coil stretches lie at residues 33–102 (TTTL…LIMS) and 131–185 (SKEL…ITRA). A disordered region spans residues 193-216 (EDAAESSSHSASSVPNTDLSLRKS). Positions 206 to 216 (VPNTDLSLRKS) are enriched in polar residues.

The protein belongs to the SIKE family.

Its subcellular location is the cytoplasm. In Xenopus tropicalis (Western clawed frog), this protein is FGFR1 oncogene partner 2 homolog (fgfr1op2).